The following is an 833-amino-acid chain: Leucine--tRNA ligase (833 aa).

Residues 41-52 (PYPSGAGLHVGH) carry the 'HIGH' region motif. The 'KMSKS' region signature appears at 610–614 (KMSKS). An ATP-binding site is contributed by Lys-613.

It belongs to the class-I aminoacyl-tRNA synthetase family.

Its subcellular location is the cytoplasm. It carries out the reaction tRNA(Leu) + L-leucine + ATP = L-leucyl-tRNA(Leu) + AMP + diphosphate. The chain is Leucine--tRNA ligase from Streptococcus pyogenes serotype M1.